The following is a 542-amino-acid chain: Membrane protein insertase YidC (542 aa).

Residues 6 to 26 (NILLIGLLFVSFLLWQQWQAD) traverse the membrane as a helical segment. Over residues 32 to 41 (VAQTQSSVAP) the composition is skewed to polar residues. The tract at residues 32–57 (VAQTQSSVAPSTVADAHSSDVPDADS) is disordered. Transmembrane regions (helical) follow at residues 326-346 (LVVDYGFLWWLAIPIHWLLMF), 350-370 (FVGNWGVAIILITLTVRGMLY), 421-441 (GGCLPILLQMPIFIALYWVLL), 458-478 (LSVQDPYYVMPILMGVSMFIM), and 501-521 (VIFTVFFLWFPAGLVLYWLVG).

The protein belongs to the OXA1/ALB3/YidC family. Type 1 subfamily. Interacts with the Sec translocase complex via SecD. Specifically interacts with transmembrane segments of nascent integral membrane proteins during membrane integration.

It localises to the cell inner membrane. In terms of biological role, required for the insertion and/or proper folding and/or complex formation of integral membrane proteins into the membrane. Involved in integration of membrane proteins that insert both dependently and independently of the Sec translocase complex, as well as at least some lipoproteins. Aids folding of multispanning membrane proteins. The sequence is that of Membrane protein insertase YidC from Shewanella piezotolerans (strain WP3 / JCM 13877).